The primary structure comprises 425 residues: Pleckstrin homology domain-containing family A member 2 (425 aa).

Residues 7-113 enclose the PH 1 domain; sequence QNRICGFLDI…WVEALNQASK (107 aa). Lys141 is covalently cross-linked (Glycyl lysine isopeptide (Lys-Gly) (interchain with G-Cter in SUMO2)). Ser184 carries the phosphoserine modification. Residues 198 to 298 enclose the PH 2 domain; that stretch reads PLIKSGYCVK…WIEGIGAAVQ (101 aa). The span at 310-331 shows a compositional bias: polar residues; that stretch reads SRSISLTRPGSSTLTSAPNSIL. A disordered region spans residues 310-425; the sequence is SRSISLTRPG…DDENIRTSDV (116 aa). Residues Ser314 and Ser349 each carry the phosphoserine modification. Composition is skewed to basic and acidic residues over residues 363 to 375 and 400 to 410; these read AEEKPLSVEHAPE and RSEPQHPKEKP.

Binds MPDZ and PTPN13.

It localises to the cytoplasm. The protein localises to the cell membrane. It is found in the nucleus. Its function is as follows. Binds specifically to phosphatidylinositol 3,4-diphosphate (PtdIns3,4P2), but not to other phosphoinositides. May recruit other proteins to the plasma membrane. The polypeptide is Pleckstrin homology domain-containing family A member 2 (Plekha2) (Mus musculus (Mouse)).